The following is a 792-amino-acid chain: Phenylalanine--tRNA ligase beta subunit (792 aa).

A tRNA-binding domain is found at 39 to 147; it reads ARTLEKVVVG…ADAPIGKNIQ (109 aa). A B5 domain is found at 400 to 475; it reads PKIPRIILRP…HLYGYDRIPQ (76 aa). 4 residues coordinate Mg(2+): D453, D459, E462, and E463. The FDX-ACB domain maps to 697–791; it reads SKFPSIRRDI…LERKFNAKLR (95 aa).

The protein belongs to the phenylalanyl-tRNA synthetase beta subunit family. Type 1 subfamily. As to quaternary structure, tetramer of two alpha and two beta subunits. Mg(2+) serves as cofactor.

Its subcellular location is the cytoplasm. It catalyses the reaction tRNA(Phe) + L-phenylalanine + ATP = L-phenylalanyl-tRNA(Phe) + AMP + diphosphate + H(+). The sequence is that of Phenylalanine--tRNA ligase beta subunit from Coxiella burnetii (strain RSA 493 / Nine Mile phase I).